Reading from the N-terminus, the 350-residue chain is ATP-dependent (S)-NAD(P)H-hydrate dehydratase (350 aa).

Residues 35 to 342 enclose the YjeF C-terminal domain; it reads LMQSVKRIIP…PEVGRAYEEL (308 aa). Residues G139 and 192-198 each bind (6S)-NADPHX; that span reads NVAEFGR. ATP-binding positions include 230–234 and 249–258; these read KGPVD and GGLKRCGGQG. A (6S)-NADPHX-binding site is contributed by D259.

It belongs to the NnrD/CARKD family. The cofactor is Mg(2+).

It localises to the cytoplasm. The catalysed reaction is (6S)-NADHX + ATP = ADP + phosphate + NADH + H(+). It catalyses the reaction (6S)-NADPHX + ATP = ADP + phosphate + NADPH + H(+). Catalyzes the dehydration of the S-form of NAD(P)HX at the expense of ATP, which is converted to ADP. Together with NAD(P)HX epimerase, which catalyzes the epimerization of the S- and R-forms, the enzyme allows the repair of both epimers of NAD(P)HX, a damaged form of NAD(P)H that is a result of enzymatic or heat-dependent hydration. The chain is ATP-dependent (S)-NAD(P)H-hydrate dehydratase from Mycosarcoma maydis (Corn smut fungus).